Consider the following 202-residue polypeptide: Imidazoleglycerol-phosphate dehydratase (202 aa).

It belongs to the imidazoleglycerol-phosphate dehydratase family.

The protein resides in the cytoplasm. The catalysed reaction is D-erythro-1-(imidazol-4-yl)glycerol 3-phosphate = 3-(imidazol-4-yl)-2-oxopropyl phosphate + H2O. It participates in amino-acid biosynthesis; L-histidine biosynthesis; L-histidine from 5-phospho-alpha-D-ribose 1-diphosphate: step 6/9. The chain is Imidazoleglycerol-phosphate dehydratase from Corynebacterium efficiens (strain DSM 44549 / YS-314 / AJ 12310 / JCM 11189 / NBRC 100395).